Reading from the N-terminus, the 1214-residue chain is Ubiquitin carboxyl-terminal hydrolase 36 (1214 aa).

The interval 124–169 (AVGSNGHDNNTVNGGTVNGNRKQTVDSGQSNQNSSANPNELPKPKR) is disordered. Low complexity predominate over residues 132–143 (NNTVNGGTVNGN). Over residues 144 to 161 (RKQTVDSGQSNQNSSANP) the composition is skewed to polar residues. A USP domain is found at 192 to 502 (AGMLNVGNTC…NAYIMFYELD (311 aa)). The active-site Nucleophile is Cys201. The active-site Proton acceptor is the His461. The segment covering 509 to 523 (SSTINNNSSSSSNNS) has biased composition (low complexity). The interval 509 to 532 (SSTINNNSSSSSNNSVAPKLNGLR) is disordered. 2 positions are modified to phosphoserine: Ser553 and Ser555. Disordered stretches follow at residues 631-819 (GEAA…KQKT), 836-964 (HRIA…ASKS), 977-1001 (QKLL…SESV), 1048-1161 (HGDT…PNFQ), and 1176-1214 (KFQQ…QQQS). Positions 633–651 (AAPNANTNANANKSSCNNN) are enriched in low complexity. Residues 666–685 (SDEDEDEDDSDDDDDDDDDD) show a composition bias toward acidic residues. Thr717 is modified (phosphothreonine). Phosphoserine occurs at positions 727 and 729. Low complexity-rich tracts occupy residues 735–751 (QQQQ…PQQL) and 785–816 (KTNG…NSSK). A compositionally biased stretch (polar residues) spans 856–868 (EQVQTEQGTKKLN). Over residues 869-878 (SASSASASKS) the composition is skewed to low complexity. The residue at position 891 (Ser891) is a Phosphoserine. Thr894 is modified (phosphothreonine). Ser897 is subject to Phosphoserine. The segment covering 915-942 (DDDDEEDEEEDDVEADADQEDDDDEVVV) has biased composition (acidic residues). Thr951 is modified (phosphothreonine). Residues 983-1001 (SAKSAATTRPGNGYQSESV) are compositionally biased toward polar residues. Over residues 1058–1076 (NSSSNNSSNINSNSNSNSN) the composition is skewed to low complexity. Positions 1089–1098 (EAREQRKRDA) are enriched in basic and acidic residues. Composition is skewed to low complexity over residues 1178–1188 (QQQRALQRHLA) and 1197–1214 (QQQS…QQQS).

It belongs to the peptidase C19 family. Interacts with atms/PAF1, but not with CycT.

It localises to the nucleus. Its subcellular location is the nucleolus. The enzyme catalyses Thiol-dependent hydrolysis of ester, thioester, amide, peptide and isopeptide bonds formed by the C-terminal Gly of ubiquitin (a 76-residue protein attached to proteins as an intracellular targeting signal).. Required for maintaining multiple types of adult stem cells, including male and female germline, epithelial follicle cell and intestinal stem cells. May function as a transcriptional repressor by continually deubiquiting histone H2B at the promoters of genes critical for cellular differentiation, thereby preventing histone H3 'Lys-4' trimethylation (H3K4). Controls selective autophagy activation by ubiquitinated proteins. The sequence is that of Ubiquitin carboxyl-terminal hydrolase 36 (Usp36) from Drosophila virilis (Fruit fly).